The chain runs to 351 residues: tRNA N6-adenosine threonylcarbamoyltransferase (351 aa).

Residues histidine 124 and histidine 128 each contribute to the Fe cation site. Substrate is bound by residues 146–150 (LVSGG), aspartate 180, glycine 193, aspartate 197, and asparagine 285. Aspartate 313 is a Fe cation binding site.

Belongs to the KAE1 / TsaD family. It depends on Fe(2+) as a cofactor.

Its subcellular location is the cytoplasm. The enzyme catalyses L-threonylcarbamoyladenylate + adenosine(37) in tRNA = N(6)-L-threonylcarbamoyladenosine(37) in tRNA + AMP + H(+). Required for the formation of a threonylcarbamoyl group on adenosine at position 37 (t(6)A37) in tRNAs that read codons beginning with adenine. Is involved in the transfer of the threonylcarbamoyl moiety of threonylcarbamoyl-AMP (TC-AMP) to the N6 group of A37, together with TsaE and TsaB. TsaD likely plays a direct catalytic role in this reaction. The protein is tRNA N6-adenosine threonylcarbamoyltransferase of Mycobacterium leprae (strain TN).